The primary structure comprises 151 residues: Ribosome maturation factor RimP (151 aa).

The protein belongs to the RimP family.

It localises to the cytoplasm. In terms of biological role, required for maturation of 30S ribosomal subunits. The polypeptide is Ribosome maturation factor RimP (Aliivibrio salmonicida (strain LFI1238) (Vibrio salmonicida (strain LFI1238))).